The sequence spans 88 residues: Acylphosphatase (88 aa).

Positions 3-88 (AARFVVSGVV…VPPTEDFVTG (86 aa)) constitute an Acylphosphatase-like domain. Catalysis depends on residues Arg-18 and Asn-36.

Belongs to the acylphosphatase family.

The enzyme catalyses an acyl phosphate + H2O = a carboxylate + phosphate + H(+). The polypeptide is Acylphosphatase (acyP) (Xanthomonas oryzae pv. oryzae (strain MAFF 311018)).